The primary structure comprises 239 residues: O-methyltransferase ankF (239 aa).

S-adenosyl-L-methionine contacts are provided by residues E71, 73–74 (GT), S79, E98, and A127.

It belongs to the class I-like SAM-binding methyltransferase superfamily. Cation-dependent O-methyltransferase family.

It catalyses the reaction NK13650 B + S-adenosyl-L-methionine = NK13650 D + S-adenosyl-L-homocysteine + H(+). It participates in secondary metabolite biosynthesis. Functionally, O-methyltransferase; part of the ank cluster that mediates the biosynthesis of NK13650 C, a highly modified cyclo-arginine-tyrosine dipeptide. AnkF converts NK13650 B to produce NK13650 D via methylation of the C-17 phenol group. Within the pathway, the cyclodipeptide synthase ankA acts as the scaffold-generating enzyme and is responsible for formation of the cyclo-Arg-Tyr diketopiperazine (cRY) from L-Arg and L-Tyr. The ankA product cRY is desaturated by the cytochrome P450 monooxygenase ankB to yield a dehydro-cyclodipeptide intermediate. The FAD-dependent monooxygenase ankC then installs the m-OH, ankD catalyzes the attachment of L-homoserine, and ankE ligates citrate to the ankD product to yield NK13650 B. The O-methyltransferase ankF is responsible for methylation of the C-17 phenol group of NK13650 B to produce NK13650 D. Amidation of NK13650 D with L-Asp by ankG then leads to the production of NK13650 C, whereas amidation of NK13650 B produces NK13650 A. This Aspergillus thermomutatus (Neosartorya pseudofischeri) protein is O-methyltransferase ankF.